The primary structure comprises 437 residues: uncharacterized protein (437 aa).

2 helical membrane-spanning segments follow: residues 102–122 and 272–292; these read GIYM…PVII and ILSI…ATVW.

It belongs to the herpesviridae UL49 family.

It is found in the host membrane. This is an uncharacterized protein from Connochaetes taurinus (Blue wildebeest).